The primary structure comprises 461 residues: tRNA modification GTPase MnmE (461 aa).

(6S)-5-formyl-5,6,7,8-tetrahydrofolate is bound by residues Lys-32, Glu-89, and Lys-128. Residues 224–387 (GHALSIVGKP…LGQKISAFFP (164 aa)) enclose the TrmE-type G domain. Asn-234 is a binding site for K(+). Residues 234-239 (NAGKSS), 253-259 (SDIKGTT), and 278-281 (DTAG) contribute to the GTP site. Ser-238 is a binding site for Mg(2+). Positions 253, 255, and 258 each coordinate K(+). Mg(2+) is bound at residue Thr-259. Residue Lys-461 participates in (6S)-5-formyl-5,6,7,8-tetrahydrofolate binding.

This sequence belongs to the TRAFAC class TrmE-Era-EngA-EngB-Septin-like GTPase superfamily. TrmE GTPase family. In terms of assembly, homodimer. Heterotetramer of two MnmE and two MnmG subunits. It depends on K(+) as a cofactor.

It localises to the cytoplasm. Exhibits a very high intrinsic GTPase hydrolysis rate. Involved in the addition of a carboxymethylaminomethyl (cmnm) group at the wobble position (U34) of certain tRNAs, forming tRNA-cmnm(5)s(2)U34. The chain is tRNA modification GTPase MnmE from Helicobacter pylori (strain HPAG1).